Reading from the N-terminus, the 142-residue chain is Required for drug-induced death protein 1 (142 aa).

2 disordered regions span residues 1–32 (MTVG…DEEA) and 46–66 (EAAA…TRGA). Residues 116–138 (VVIGLQGFAAAYSAPFAVATSVV) form a helical membrane-spanning segment.

The protein resides in the membrane. Its function is as follows. Regulates drug efflux through modulation of ABCB1 localization and activity. The polypeptide is Required for drug-induced death protein 1 (Homo sapiens (Human)).